A 388-amino-acid polypeptide reads, in one-letter code: RNA binding motif protein, X-linked-like-1 (388 aa).

An RRM domain is found at 8–86; sequence GKLFIGGLNT…KAIKVEQATK (79 aa). Basic and acidic residues predominate over residues 61 to 80; the sequence is DAKDVARDMNGKSLDGKAIK. Positions 61-388 are disordered; it reads DAKDVARDMN…SDRGGGQKQI (328 aa). Lysine 80 is covalently cross-linked (Glycyl lysine isopeptide (Lys-Gly) (interchain with G-Cter in SUMO2)). Serine 88 carries the post-translational modification Phosphoserine. Over residues 148-161 the composition is skewed to pro residues; that stretch reads RGPPPRSGGPPPKR. Composition is skewed to basic and acidic residues over residues 191-212 and 238-271; these read PRRE…DGYS and YTYR…EYSD. A compositionally biased stretch (low complexity) spans 320-332; it reads SRDSYSSSRSDLY. Basic and acidic residues-rich tracts occupy residues 333-344 and 377-388; these read SSDRDRVGRQER and SRSDRGGGQKQI.

It is found in the nucleus. RNA-binding protein which may be involved in pre-mRNA splicing. In Rattus norvegicus (Rat), this protein is RNA binding motif protein, X-linked-like-1 (Rbmxl1).